A 329-amino-acid chain; its full sequence is Ubiquinol oxidase 1c, mitochondrial (329 aa).

Residues 1–45 constitute a mitochondrion transit peptide; that stretch reads MITTLLRRSLLDASKQATSINGILFHQLAPAKYFRVPAVGGLRDF. A helical membrane pass occupies residues 154–174; sequence AIMLETVAAVPGMVGGMLMHF. Fe cation contacts are provided by E158, E197, and H200. A helical transmembrane segment spans residues 216–236; sequence ALVISVQGVFFNAYLIGYIIS. Fe cation is bound by residues E248, E299, and H302.

The protein belongs to the alternative oxidase family. Homodimer; disulfide-linked. Requires Fe cation as cofactor. As to expression, expressed in roots, stems, leaves, cotyledons and flowers. High expression in stamens.

It localises to the mitochondrion inner membrane. The enzyme catalyses 2 a ubiquinol + O2 = 2 a ubiquinone + 2 H2O. In terms of biological role, catalyzes the cyanide-resistant oxidation of ubiquinol and the reduction of molecular oxygen to water, but does not translocate protons and consequently is not linked to oxidative phosphorylation. May increase respiration when the cytochrome respiratory pathway is restricted, or in response to low temperatures. The sequence is that of Ubiquinol oxidase 1c, mitochondrial (AOX1C) from Arabidopsis thaliana (Mouse-ear cress).